Consider the following 360-residue polypeptide: NAD(P)H-quinone oxidoreductase subunit 1, chloroplastic (360 aa).

A run of 8 helical transmembrane segments spans residues 27–47, 98–118, 129–149, 165–185, 203–223, 253–273, 297–317, and 340–360; these read VWIF…VLVI, FSIG…VIPF, IGIF…LMSG, AAQS…ISLL, FWGW…ISSL, FGLF…FVTI, VFGT…VLVI, and FLLP…LLSL.

This sequence belongs to the complex I subunit 1 family. NDH is composed of at least 16 different subunits, 5 of which are encoded in the nucleus.

Its subcellular location is the plastid. The protein localises to the chloroplast thylakoid membrane. It carries out the reaction a plastoquinone + NADH + (n+1) H(+)(in) = a plastoquinol + NAD(+) + n H(+)(out). The catalysed reaction is a plastoquinone + NADPH + (n+1) H(+)(in) = a plastoquinol + NADP(+) + n H(+)(out). Its function is as follows. NDH shuttles electrons from NAD(P)H:plastoquinone, via FMN and iron-sulfur (Fe-S) centers, to quinones in the photosynthetic chain and possibly in a chloroplast respiratory chain. The immediate electron acceptor for the enzyme in this species is believed to be plastoquinone. Couples the redox reaction to proton translocation, and thus conserves the redox energy in a proton gradient. The chain is NAD(P)H-quinone oxidoreductase subunit 1, chloroplastic from Draba nemorosa (Woodland whitlowgrass).